The chain runs to 318 residues: Phosphatidylglycerol--prolipoprotein diacylglyceryl transferase (318 aa).

3 consecutive transmembrane segments (helical) span residues 24-44 (GPST…YLLP), 60-80 (LLLL…VFEI), and 115-135 (LFSG…LFIT). Residue arginine 164 coordinates a 1,2-diacyl-sn-glycero-3-phospho-(1'-sn-glycerol). 2 helical membrane passes run 198-218 (VPVW…FFYF) and 285-305 (GFSQ…FFIL).

This sequence belongs to the Lgt family.

Its subcellular location is the cell inner membrane. It catalyses the reaction L-cysteinyl-[prolipoprotein] + a 1,2-diacyl-sn-glycero-3-phospho-(1'-sn-glycerol) = an S-1,2-diacyl-sn-glyceryl-L-cysteinyl-[prolipoprotein] + sn-glycerol 1-phosphate + H(+). It functions in the pathway protein modification; lipoprotein biosynthesis (diacylglyceryl transfer). Its function is as follows. Catalyzes the transfer of the diacylglyceryl group from phosphatidylglycerol to the sulfhydryl group of the N-terminal cysteine of a prolipoprotein, the first step in the formation of mature lipoproteins. This chain is Phosphatidylglycerol--prolipoprotein diacylglyceryl transferase, found in Leptospira interrogans serogroup Icterohaemorrhagiae serovar copenhageni (strain Fiocruz L1-130).